A 118-amino-acid chain; its full sequence is MARIAGVNIPVHKHTVIGLTSIYGIGKTRAQQICQTCNVDPTVKIKDLSEEQVESLRTEVAKFTVEGDLRREVSMDIKRLMDLGCFRGRRHRRSLPVRGQRTKTNARTRKGPRKPIKA.

The tract at residues 91–118 (HRRSLPVRGQRTKTNARTRKGPRKPIKA) is disordered.

The protein belongs to the universal ribosomal protein uS13 family. In terms of assembly, part of the 30S ribosomal subunit. Forms a loose heterodimer with protein S19. Forms two bridges to the 50S subunit in the 70S ribosome.

Located at the top of the head of the 30S subunit, it contacts several helices of the 16S rRNA. In the 70S ribosome it contacts the 23S rRNA (bridge B1a) and protein L5 of the 50S subunit (bridge B1b), connecting the 2 subunits; these bridges are implicated in subunit movement. Contacts the tRNAs in the A and P-sites. This chain is Small ribosomal subunit protein uS13, found in Francisella tularensis subsp. tularensis (strain FSC 198).